A 172-amino-acid polypeptide reads, in one-letter code: Large ribosomal subunit protein bL17 (172 aa).

Residues 127–172 form a disordered region; it reads KAAKQDRAKRVKGSKKVTGDVAPAVAPVPSAPAETQEEAKAPESAE. The span at 147 to 159 shows a compositional bias: low complexity; sequence VAPAVAPVPSAPA. The segment covering 163–172 has biased composition (basic and acidic residues); sequence EEAKAPESAE.

The protein belongs to the bacterial ribosomal protein bL17 family. Part of the 50S ribosomal subunit. Contacts protein L32.

This Chlorobium luteolum (strain DSM 273 / BCRC 81028 / 2530) (Pelodictyon luteolum) protein is Large ribosomal subunit protein bL17.